The following is a 63-amino-acid chain: Large ribosomal subunit protein uL30 (63 aa).

It belongs to the universal ribosomal protein uL30 family. Part of the 50S ribosomal subunit.

The sequence is that of Large ribosomal subunit protein uL30 from Xanthomonas campestris pv. campestris (strain 8004).